The following is a 557-amino-acid chain: Potassium-transporting ATPase potassium-binding subunit (557 aa).

The next 12 helical transmembrane spans lie at 5 to 25 (GFLL…PLGS), 63 to 83 (LSAI…MLLG), 132 to 152 (GLTV…FALI), 170 to 190 (LLRI…LFFI), 253 to 273 (FVQM…FGEV), 283 to 303 (LLWA…WAEV), 329 to 349 (VLVS…AVIA), 356 to 376 (ALGG…FGGV), 379 to 399 (GLYG…LMIG), 416 to 436 (LTAL…ALAM), 484 to 504 (LLAF…MAIA), and 526 to 546 (LFVG…FIPA).

This sequence belongs to the KdpA family. In terms of assembly, the system is composed of three essential subunits: KdpA, KdpB and KdpC.

It localises to the cell inner membrane. Its function is as follows. Part of the high-affinity ATP-driven potassium transport (or Kdp) system, which catalyzes the hydrolysis of ATP coupled with the electrogenic transport of potassium into the cytoplasm. This subunit binds the periplasmic potassium ions and delivers the ions to the membrane domain of KdpB through an intramembrane tunnel. This is Potassium-transporting ATPase potassium-binding subunit from Escherichia fergusonii (strain ATCC 35469 / DSM 13698 / CCUG 18766 / IAM 14443 / JCM 21226 / LMG 7866 / NBRC 102419 / NCTC 12128 / CDC 0568-73).